Here is a 374-residue protein sequence, read N- to C-terminus: Alpha-N-acetylgalactosaminide alpha-2,6-sialyltransferase 2 (374 aa).

Over 1 to 7 the chain is Cytoplasmic; sequence MGLPRGS. A helical; Signal-anchor for type II membrane protein transmembrane segment spans residues 8–28; sequence FFWLLLLLTAACSGLLFALYF. Residues 29–374 lie on the Lumenal side of the membrane; it reads SAVQRYPGPA…KAGILQLYQR (346 aa). 2 cysteine pairs are disulfide-bonded: Cys66/Cys148 and Cys151/Cys317. N-linked (GlcNAc...) asparagine glycosylation is found at Asn85 and Asn130. Asn156 is a CMP-N-acetyl-beta-neuraminate binding site. Residue Asn161 is glycosylated (N-linked (GlcNAc...) asparagine). CMP-N-acetyl-beta-neuraminate contacts are provided by Asn179, Ser304, and His336.

This sequence belongs to the glycosyltransferase 29 family. As to expression, expressed in skeletal muscle, heart, kidney, placenta, lung and leukocytes.

Its subcellular location is the golgi apparatus membrane. It carries out the reaction a beta-D-galactosyl-(1-&gt;3)-N-acetyl-alpha-D-galactosaminyl derivative + CMP-N-acetyl-beta-neuraminate = a beta-D-galactosyl-(1-&gt;3)-[N-acetyl-alpha-neuraminyl-(2-&gt;6)]-N-acetyl-alpha-D-galactosaminyl derivative + CMP + H(+). It catalyses the reaction a 3-O-[N-acetyl-alpha-D-galactosaminyl]-L-threonyl-[protein] + CMP-N-acetyl-beta-neuraminate = a 3-O-[N-acetyl-alpha-neuraminosyl-(2-&gt;6)-N-acetyl-alpha-D-galactosaminyl]-L-threonyl-[protein] + CMP + H(+). The catalysed reaction is a 3-O-[N-acetyl-alpha-neuraminyl-(2-&gt;3)-beta-D-galactosyl-(1-&gt;3)-N-acetyl-alpha-D-galactosaminyl]-L-threonyl-[protein] + CMP-N-acetyl-beta-neuraminate = a 3-O-{alpha-Neu5Ac-(2-&gt;3)-beta-D-Gal-(1-&gt;3)-[alpha-Neu5Ac-(2-&gt;6)]-alpha-D-GalNAc}-L-threonyl-[protein] + CMP + H(+). The protein operates within protein modification; protein glycosylation. Functionally, catalyzes the transfer of N-acetylneuraminyl groups onto glycan chains in glycoproteins. Conjugates sialic acid with an alpha-2-6 linkage to N-acetylgalactosamine (GalNAc) glycan chains linked to serine or threonine in glycoproteins. Sialylates alphaGalNAc- and Galbeta1-&gt;3GalNAc-O-Ser/Thr epitopes also known as Tn and T antigens. In Homo sapiens (Human), this protein is Alpha-N-acetylgalactosaminide alpha-2,6-sialyltransferase 2 (ST6GALNAC2).